Here is a 101-residue protein sequence, read N- to C-terminus: Acylphosphatase (101 aa).

In terms of domain architecture, Acylphosphatase-like spans 12 to 98 (RVHVFVTGRV…EGLRGFEVKR (87 aa)). Residues Arg27 and Asn45 contribute to the active site.

This sequence belongs to the acylphosphatase family.

The enzyme catalyses an acyl phosphate + H2O = a carboxylate + phosphate + H(+). The sequence is that of Acylphosphatase (acyP) from Trichormus variabilis (strain ATCC 29413 / PCC 7937) (Anabaena variabilis).